Here is a 94-residue protein sequence, read N- to C-terminus: MQLNVTHRTNAERLEKHNRELETALAKKTEEHKEQAKALLLLQDDMLANQIQLNVLEQKTEALQQENETLVQRLVAKAAADADKMNDANAFLER.

Positions 2–77 (QLNVTHRTNA…ETLVQRLVAK (76 aa)) form a coiled coil.

It belongs to the ATG16 family. As to quaternary structure, homodimer. Part of the ATG5-ATG12/ATG16 complex. Several units of each may be present in this complex.

It is found in the preautophagosomal structure membrane. Stabilizes the ATG5-ATG12 conjugate which is necessary for autophagy. The ATG5-ATG12/ATG16 complex is required for efficient promotion of ATG8-conjugation to phosphatidylethanolamine and ATG8 localization to the pre-autophagosomal structure (PAS). Also recruits ATG3 to the PAS. Involved in endoplasmic reticulum-specific autophagic process and is essential for the survival of cells subjected to severe ER stress. In Yarrowia lipolytica (strain CLIB 122 / E 150) (Yeast), this protein is Autophagy protein 16 (ATG16).